We begin with the raw amino-acid sequence, 189 residues long: Proline-rich protein 29 (189 aa).

The tract at residues 152–189 is disordered; sequence SREREVRAVPPPPPPSATGTVGADVPPASDYYDAESLL.

The chain is Proline-rich protein 29 (PRR29) from Homo sapiens (Human).